Consider the following 325-residue polypeptide: Glutarate 2-hydroxylase (325 aa).

3 residues coordinate Fe cation: His-160, Asp-162, and His-292.

The protein belongs to the glutarate hydroxylase family. As to quaternary structure, homotetramer. It depends on Fe(2+) as a cofactor.

It catalyses the reaction glutarate + 2-oxoglutarate + O2 = (S)-2-hydroxyglutarate + succinate + CO2. Its pathway is amino-acid degradation. Functionally, acts as an alpha-ketoglutarate-dependent dioxygenase catalyzing hydroxylation of glutarate (GA) to L-2-hydroxyglutarate (L2HG). Functions in a L-lysine degradation pathway that proceeds via cadaverine, glutarate and L-2-hydroxyglutarate. This is Glutarate 2-hydroxylase from Escherichia coli O157:H7.